A 336-amino-acid polypeptide reads, in one-letter code: Phenylalanine--tRNA ligase alpha subunit (336 aa).

Glu-263 is a Mg(2+) binding site.

It belongs to the class-II aminoacyl-tRNA synthetase family. Phe-tRNA synthetase alpha subunit type 1 subfamily. As to quaternary structure, tetramer of two alpha and two beta subunits. Mg(2+) is required as a cofactor.

It is found in the cytoplasm. It carries out the reaction tRNA(Phe) + L-phenylalanine + ATP = L-phenylalanyl-tRNA(Phe) + AMP + diphosphate + H(+). The polypeptide is Phenylalanine--tRNA ligase alpha subunit (Thermosynechococcus vestitus (strain NIES-2133 / IAM M-273 / BP-1)).